The sequence spans 72 residues: Defensin-like protein 35 (72 aa).

Positions 1–22 are cleaved as a signal peptide; it reads MASNKISFSFVLCLYMCSLLDA. 3 disulfide bridges follow: Cys-32-Cys-58, Cys-44-Cys-67, and Cys-48-Cys-69.

This sequence belongs to the DEFL family.

The protein resides in the secreted. This is Defensin-like protein 35 from Arabidopsis thaliana (Mouse-ear cress).